A 734-amino-acid polypeptide reads, in one-letter code: MALRFPRFSQGLAQDPTTRRIWFGIATAHDFESHDDITEERLYQNIFASHFGQLAIIFLWTSGNLFHVAWQGNFESWVQDPLHVRPIAHAIWDPHFGQPAVEAFTRGGALGPVNIAYSGVYQWWYTIGLRTNEDLYTGALFLLFLSVISLLGGWLHLQPKWKPSVSWFKNAESRLNHHLSGLFGVSSLAWTGHLVHVAIPGSRGEYVRWNNFLDVLPHPQGLGPLFTGQWNLYAQNPDSSSHLFGTSQGAGTAILTLLGGFHPQTQSLWLTDMAHHHLAIAFVFLVAGHMYRTNFGIGHSMKDLLEAHIPPGGRLGRGHKGLYDTINNSLHFQLGLALASLGVITSLVAQHMYSLPAYAFIAQDFTTQAALYTHHQYIAGFIMTGAFAHGAIFFIRDYNPEQNEDNVLARMLDHKEAIISHLSWASLFLGFHTLGLYVHNDVMLAFGTPEKQILIEPIFAQWIQSAHGKTSYGFDVLLSSTSGPAFNAGRSIWLPGWLNAVNENSNSLFLTIGPGDFLVHHAIALGLHTTTLILVKGALDARGSKLMPDKKDFGYSFPCDGPGRGGTCDISAWDAFYLAVFWMLNTIGWVTFYWHWKHITLWQGNVSQFNESSTYLMGWLRDYLWLNSSQLINGYNPFGMNSLSVWAWMFLFGHLVWATGFMFLISWRGYWQELIETLAWAHERTPLANLIRWRDKPVALSIVQARLVGLAHFSVGYIFTYAAFLIASTSGKFG.

8 helical membrane passes run 46–69 (IFASHFGQLAIIFLWTSGNLFHVA), 135–158 (LYTGALFLLFLSVISLLGGWLHLQ), 175–199 (LNHHLSGLFGVSSLAWTGHLVHVAI), 273–291 (MAHHHLAIAFVFLVAGHMY), 330–353 (LHFQLGLALASLGVITSLVAQHMY), 369–395 (AALYTHHQYIAGFIMTGAFAHGAIFFI), 417–439 (AIISHLSWASLFLGFHTLGLYVH), and 517–535 (FLVHHAIALGLHTTTLILV). 2 residues coordinate [4Fe-4S] cluster: cysteine 559 and cysteine 568. Transmembrane regions (helical) follow at residues 575-596 (AFYLAVFWMLNTIGWVTFYWHW) and 643-665 (LSVWAWMFLFGHLVWATGFMFLI). Chlorophyll a contacts are provided by histidine 654, methionine 662, and tyrosine 670. Tryptophan 671 contributes to the phylloquinone binding site. A helical transmembrane segment spans residues 707–727 (LVGLAHFSVGYIFTYAAFLIA).

It belongs to the PsaA/PsaB family. As to quaternary structure, the PsaA/B heterodimer binds the P700 chlorophyll special pair and subsequent electron acceptors. PSI consists of a core antenna complex that captures photons, and an electron transfer chain that converts photonic excitation into a charge separation. The eukaryotic PSI reaction center is composed of at least 11 subunits. Requires P700 is a chlorophyll a/chlorophyll a' dimer, A0 is one or more chlorophyll a, A1 is one or both phylloquinones and FX is a shared 4Fe-4S iron-sulfur center. as cofactor.

The protein localises to the plastid. It is found in the chloroplast thylakoid membrane. It carries out the reaction reduced [plastocyanin] + hnu + oxidized [2Fe-2S]-[ferredoxin] = oxidized [plastocyanin] + reduced [2Fe-2S]-[ferredoxin]. In terms of biological role, psaA and PsaB bind P700, the primary electron donor of photosystem I (PSI), as well as the electron acceptors A0, A1 and FX. PSI is a plastocyanin-ferredoxin oxidoreductase, converting photonic excitation into a charge separation, which transfers an electron from the donor P700 chlorophyll pair to the spectroscopically characterized acceptors A0, A1, FX, FA and FB in turn. Oxidized P700 is reduced on the lumenal side of the thylakoid membrane by plastocyanin. This is Photosystem I P700 chlorophyll a apoprotein A2 from Spinacia oleracea (Spinach).